The primary structure comprises 409 residues: Glycinol 4-dimethylallyltransferase (409 aa).

The N-terminal 44 residues, 1–44 (MDWGLAISSHPKPYSVTTGGNLWRSKHTTKNIYFASSWISKASR), are a transit peptide targeting the chloroplast. Transmembrane regions (helical) follow at residues 113–133 (LSAF…LCAF), 148–168 (LSFL…EIYL), 200–220 (VIIS…TGSW), 222–242 (LICN…DVPL), 249–269 (PFVA…ISYF), 287–307 (LGFL…SKDI), 330–350 (AFWI…LAGA), 354–374 (HFWT…ILWY), and 388–408 (GSFY…MALI).

This sequence belongs to the UbiA prenyltransferase family. It depends on Mg(2+) as a cofactor. The cofactor is Mn(2+). Co(2+) is required as a cofactor.

The protein resides in the plastid. It is found in the chloroplast membrane. The enzyme catalyses (6aS,11aS)-3,6a,9-trihydroxypterocarpan + dimethylallyl diphosphate = (6aS,11aS)-2-dimethylallyl-3,6a,9-trihydroxypterocarpan + diphosphate. It catalyses the reaction (6aS,11aS)-3,6a,9-trihydroxypterocarpan + dimethylallyl diphosphate = (6aS,11aS)-4-dimethylallyl-3,6a,9-trihydroxypterocarpan + diphosphate. The protein operates within phytoalexin biosynthesis; pterocarpan phytoalexin biosynthesis. Functionally, proposed to be involved in the biosynthesis of pterocarpan phytoalexins, specifically glyceollins. Can act as a prenyltransferase towards glycinol which is the direct precursor of glyceollins. Seems to be specific for prenylation at C-4 thus producing glyceollin I. This is Glycinol 4-dimethylallyltransferase (G4DT) from Glycine max (Soybean).